The chain runs to 550 residues: Arginine--tRNA ligase (550 aa).

A 'HIGH' region motif is present at residues 130–140; it reads ANPTGPIHIGG.

The protein belongs to the class-I aminoacyl-tRNA synthetase family. In terms of assembly, monomer.

The protein resides in the cytoplasm. It catalyses the reaction tRNA(Arg) + L-arginine + ATP = L-arginyl-tRNA(Arg) + AMP + diphosphate. The protein is Arginine--tRNA ligase of Mycolicibacterium gilvum (strain PYR-GCK) (Mycobacterium gilvum (strain PYR-GCK)).